A 345-amino-acid chain; its full sequence is Opioid-binding protein/cell adhesion molecule (345 aa).

The N-terminal stretch at Met1–Thr27 is a signal peptide. 3 consecutive Ig-like C2-type domains span residues Pro39–Ser126, Pro136–Thr219, and Pro223–Thr310. 3 N-linked (GlcNAc...) asparagine glycosylation sites follow: Asn44, Asn70, and Asn140. Cys57 and Cys115 are disulfide-bonded. Cystine bridges form between Cys157-Cys202 and Cys244-Cys296. N-linked (GlcNAc...) asparagine glycosylation is found at Asn285, Asn293, and Asn306. The GPI-anchor amidated asparagine moiety is linked to residue Asn322. The propeptide at Ser323–Phe345 is removed in mature form.

The protein belongs to the immunoglobulin superfamily. IgLON family.

The protein resides in the cell membrane. Functionally, binds opioids in the presence of acidic lipids; probably involved in cell contact. This is Opioid-binding protein/cell adhesion molecule (OPCML) from Bos taurus (Bovine).